A 948-amino-acid chain; its full sequence is MAQQYQPGQRWISDSEAELGLGTILAQDGRLLTVLYPATGDTRQYSLRNAPLTRVRFSPGDQITHFEGWKLTVREVEDIDGLMVYHGLDGQNQPRTLPETQLSNFIQFRLASDRLFAGQIDPLSWFSLRYNTLQHTSKQMQSALWGLGGCRAQPIAHQLHIAREVADRSAPRVLLADEVGLGKTIEAGLVIHRQLLSGRASRVLILVPENLQHQWLVEMRRRFNLQVALFDAERFIESDASNPFEDAQLALVALEWLVDDEKAQDALFAAGWDLLVVDEAHHLVWHEDQVSAEYGLVEQLAQVIPGVLLLTATPEQLGQDSHFARLRLLDPNRFHDLAAFRAESEHYRPVAEAVQELLDEGRLSPKAHATILGFLGAEGEALLAAVSDGDTQASARLIRELLDRHGTGRVLFRNTRAAIQGFPERQLHPYPLPTPEQYRDLPAGEHAELYPEVAFQAQGEVADDERWWRFDPRVDWLIDTLKMLKRTKVLVICAHAETAMDLEDALRVRSGIPASVFHEGMSILERDRAAAYFADEEFGAQVLICSEIGSEGRNFQFAHHLVMFDLPAHPDLLEQRIGRLDRIGQKHTIQLHIPYLQDSPQERLFQWYHEGLNAFLNTCPTGNALQHQFGPRLLPLLEGGENKAWDTLVADARSERERLEAELHTGRDRLLELNSGGAGEGQALVEAILEQDDQFALPIYMETLFDAFGIDSEDHSENALILKPSEKMLDASFPLGDDEGVTITYDRGQALSREDMQFLTWEHPMVQGGMDLVLSGSMGNTAVALIKNKALKPGTVLLELLFVSEVVAPRSLQLGRYLPPAALRCLLDANGNDLASRVAFETLNDQLESVPRASANKFVQAQRDVLAKRISGGEEKILPAHNERVAEAQRRLAAEADEELARLVALQAVNPSVRDSEIDALRKRREDGLAMLEKAALRLEAIRVLVAG.

The Helicase ATP-binding domain maps to 164–332 (EVADRSAPRV…FARLRLLDPN (169 aa)). 177–184 (DEVGLGKT) contributes to the ATP binding site. A DEAH box motif is present at residues 278 to 281 (DEAH). The region spanning 473-627 (RVDWLIDTLK…TCPTGNALQH (155 aa)) is the Helicase C-terminal domain.

It belongs to the SNF2/RAD54 helicase family. RapA subfamily. As to quaternary structure, interacts with the RNAP. Has a higher affinity for the core RNAP than for the holoenzyme. Its ATPase activity is stimulated by binding to RNAP.

Functionally, transcription regulator that activates transcription by stimulating RNA polymerase (RNAP) recycling in case of stress conditions such as supercoiled DNA or high salt concentrations. Probably acts by releasing the RNAP, when it is trapped or immobilized on tightly supercoiled DNA. Does not activate transcription on linear DNA. Probably not involved in DNA repair. This chain is RNA polymerase-associated protein RapA, found in Pseudomonas putida (strain ATCC 47054 / DSM 6125 / CFBP 8728 / NCIMB 11950 / KT2440).